Consider the following 66-residue polypeptide: uncharacterized protein (66 aa).

The signal sequence occupies residues 1–25 (MIVIILLFISIIVFLSVIQPQPSKN). Residues 21–31 (QPSKNKSRQQA) show a composition bias toward polar residues. The segment at 21–66 (QPSKNKSRQQADSGYFGYSDHSSHHDGCSSDGGFSDSGCGGGGGGD) is disordered.

This is an uncharacterized protein from Bacillus subtilis (strain 168).